The sequence spans 180 residues: NADH-quinone oxidoreductase subunit I (180 aa).

4Fe-4S ferredoxin-type domains follow at residues 48–80 (IVLT…LQKA) and 90–119 (EFFR…LTPD). C60, C63, C66, C70, C99, C102, C105, and C109 together coordinate [4Fe-4S] cluster.

Belongs to the complex I 23 kDa subunit family. As to quaternary structure, NDH-1 is composed of 13 different subunits. Subunits NuoA, H, J, K, L, M, N constitute the membrane sector of the complex. [4Fe-4S] cluster serves as cofactor.

The protein localises to the cell inner membrane. It catalyses the reaction a quinone + NADH + 5 H(+)(in) = a quinol + NAD(+) + 4 H(+)(out). Functionally, NDH-1 shuttles electrons from NADH, via FMN and iron-sulfur (Fe-S) centers, to quinones in the respiratory chain. The immediate electron acceptor for the enzyme in this species is believed to be ubiquinone. Couples the redox reaction to proton translocation (for every two electrons transferred, four hydrogen ions are translocated across the cytoplasmic membrane), and thus conserves the redox energy in a proton gradient. The sequence is that of NADH-quinone oxidoreductase subunit I from Sodalis glossinidius (strain morsitans).